We begin with the raw amino-acid sequence, 220 residues long: Ribosomal RNA large subunit methyltransferase E (220 aa).

Residues Gly-60, Trp-62, Asp-92, Asp-108, and Asp-133 each contribute to the S-adenosyl-L-methionine site. Lys-173 acts as the Proton acceptor in catalysis. A disordered region spans residues 195–220 (APRKPKASRDKSSETFILGRHLKQPR).

Belongs to the class I-like SAM-binding methyltransferase superfamily. RNA methyltransferase RlmE family.

Its subcellular location is the cytoplasm. It catalyses the reaction uridine(2552) in 23S rRNA + S-adenosyl-L-methionine = 2'-O-methyluridine(2552) in 23S rRNA + S-adenosyl-L-homocysteine + H(+). Its function is as follows. Specifically methylates the uridine in position 2552 of 23S rRNA at the 2'-O position of the ribose in the fully assembled 50S ribosomal subunit. The chain is Ribosomal RNA large subunit methyltransferase E from Burkholderia pseudomallei (strain 1710b).